The primary structure comprises 490 residues: Bifunctional protein GlmU (490 aa).

The interval 1–241 (MSSPGDTAVL…SALVAGVNNR (241 aa)) is pyrophosphorylase. Residues 12-15 (LAAG), lysine 26, glutamine 83, 88-89 (GT), 112-114 (SGD), glycine 151, glutamate 166, asparagine 181, and asparagine 239 each bind UDP-N-acetyl-alpha-D-glucosamine. Aspartate 114 lines the Mg(2+) pocket. Asparagine 239 lines the Mg(2+) pocket. Residues 242-262 (VQLAQLGAELNRRIVAAHQLA) form a linker region. An N-acetyltransferase region spans residues 263–490 (GVTVVDPATT…AGGRPAGEAE (228 aa)). UDP-N-acetyl-alpha-D-glucosamine-binding residues include arginine 344 and lysine 362. Histidine 374 serves as the catalytic Proton acceptor. Tyrosine 377 and asparagine 388 together coordinate UDP-N-acetyl-alpha-D-glucosamine. Acetyl-CoA contacts are provided by residues alanine 391, 397–398 (NY), serine 416, and alanine 434. The tract at residues 462–490 (RRKRPGSAAARAAEAAEKAAGGRPAGEAE) is disordered. Residues 467 to 490 (GSAAARAAEAAEKAAGGRPAGEAE) are compositionally biased toward low complexity.

This sequence in the N-terminal section; belongs to the N-acetylglucosamine-1-phosphate uridyltransferase family. The protein in the C-terminal section; belongs to the transferase hexapeptide repeat family. As to quaternary structure, homotrimer. Requires Mg(2+) as cofactor.

It is found in the cytoplasm. It carries out the reaction alpha-D-glucosamine 1-phosphate + acetyl-CoA = N-acetyl-alpha-D-glucosamine 1-phosphate + CoA + H(+). The catalysed reaction is N-acetyl-alpha-D-glucosamine 1-phosphate + UTP + H(+) = UDP-N-acetyl-alpha-D-glucosamine + diphosphate. It functions in the pathway nucleotide-sugar biosynthesis; UDP-N-acetyl-alpha-D-glucosamine biosynthesis; N-acetyl-alpha-D-glucosamine 1-phosphate from alpha-D-glucosamine 6-phosphate (route II): step 2/2. The protein operates within nucleotide-sugar biosynthesis; UDP-N-acetyl-alpha-D-glucosamine biosynthesis; UDP-N-acetyl-alpha-D-glucosamine from N-acetyl-alpha-D-glucosamine 1-phosphate: step 1/1. It participates in bacterial outer membrane biogenesis; LPS lipid A biosynthesis. In terms of biological role, catalyzes the last two sequential reactions in the de novo biosynthetic pathway for UDP-N-acetylglucosamine (UDP-GlcNAc). The C-terminal domain catalyzes the transfer of acetyl group from acetyl coenzyme A to glucosamine-1-phosphate (GlcN-1-P) to produce N-acetylglucosamine-1-phosphate (GlcNAc-1-P), which is converted into UDP-GlcNAc by the transfer of uridine 5-monophosphate (from uridine 5-triphosphate), a reaction catalyzed by the N-terminal domain. The chain is Bifunctional protein GlmU from Mycolicibacterium paratuberculosis (strain ATCC BAA-968 / K-10) (Mycobacterium paratuberculosis).